We begin with the raw amino-acid sequence, 937 residues long: MFPTRLARLLLAVALTLPGALCGEGALGKSSMARCSLFGADFINTFDESMYSFSGDCSYLLAGDCKTHSFSIVGDFQGGRRMGLSVYLGEFFDIHVFVNGTVLQGGQHVSMPYATRGLYLETEVGHHKLSSESYGFVARIDGSGNFQILLSDRHFNKTCGLCGDFNIFAEDDFRTQEGTLTSDPYDFANSWALSSEEQRCPRVSPPSSSCNVSSELQKGLWEKCQLLKTASVFARCHALVDPEPFVALCERMLCACAQGLRCPCPVLLEYARACAKQGMLLYGWADHSSCRPDCPTGMEYKECVSPCHRTCRSLSITEVCREQCVDGCSCPEGQLLDEGRCVESTECPCVHAGKPYPPGASLSRDCNTCICRNSQWVCSNEDCPGECLITGQSHFKSFDDRHFTFSGVCQYLLAQDCQDHSFSVVIETVQCADDPDAVCTRSVTVRLPSPHHGLLKLKHGGGVALDGQDVQIPLLQGDLRIQHTVTASLQLNFGEDLQIDWDGRGRLLLKLSPVYAGRTCGLCGNYNGNQRDDFLTPAGLVEPLVEHFGNSWKLRADCEDLQEQPSDPCSLNPRLTKFADQACAILTSPKFEACHSAVSPLPYLRNCRYDVCACSDGRDCLCDAVANYAAACARRGVHVGWREPSFCALSCPHGQVYQQCGTPCNLTCRSLSHPDEECTEVCLEGCFCPPGLFLDETGSCVPKAQCPCYYDGEIFQPEDIFSDHHTMCYCEDGFMHSATSGAPGSLLPEAVLSSPLSHRSKRSLSCRPPMVKVVCPADNPRAEGLECTKTCQNYDLECMSTGCVSGCLPAPGMVRHENRCVALERCPCFHQGREYAPGDRVKVDCNSCVCQDRKWNCTDHVCDASCSALGLAHYFTFDGLKYLFPGECQYVLVQDHCGSNPGTFRVLVGNEGCSVPSLKCRKRITILVEGGEIELFD.

The first 22 residues, 1 to 22, serve as a signal peptide directing secretion; the sequence is MFPTRLARLLLAVALTLPGALC. The propeptide occupies 23–762; the sequence is GEGALGKSSM…SSPLSHRSKR (740 aa). One can recognise a VWFD 1 domain in the interval 33–201; that stretch reads ARCSLFGADF…ALSSEEQRCP (169 aa). 2 cysteine pairs are disulfide-bonded: C35–C162 and C57–C200. N-linked (GlcNAc...) asparagine glycosylation is found at N99, N156, and N211. The TIL 1 domain occupies 294–347; that stretch reads CPTGMEYKECVSPCHRTCRSLSITEVCREQCVDGCSCPEGQLLDEGRCVESTEC. Residues 385–559 enclose the VWFD 2 domain; that stretch reads GECLITGQSH…NSWKLRADCE (175 aa). Disulfide bonds link C387–C523, C409–C558, and C431–C439. The region spanning 651–706 is the TIL 2 domain; it reads CPHGQVYQQCGTPCNLTCRSLSHPDEECTEVCLEGCFCPPGLFLDETGSCVPKAQC. Residue N665 is glycosylated (N-linked (GlcNAc...) asparagine). The tract at residues 763–786 is amino-terminal; it reads SLSCRPPMVKVVCPADNPRAEGLE. 2 disulfides stabilise this stretch: C766-C807 and C775-C803. The interval 787–832 is E1; sequence CTKTCQNYDLECMSTGCVSGCLPAPGMVRHENRCVALERCPCFHQG. The interval 825 to 852 is CX; that stretch reads RCPCFHQGREYAPGDRVKVDCNSCVCQD. N-linked (GlcNAc...) asparagine glycosylation occurs at N856. The 74-residue stretch at 864 to 937 folds into the VWFD 3 domain; sequence ASCSALGLAH…VEGGEIELFD (74 aa). C913 and C920 are oxidised to a cystine.

As to quaternary structure, multimeric. Interacts with F8. In terms of processing, all cysteine residues are involved in intrachain or interchain disulfide bonds. Post-translationally, N- and O-glycosylated. Plasma.

The protein resides in the secreted. The protein localises to the extracellular space. It is found in the extracellular matrix. Functionally, important in the maintenance of hemostasis, it promotes adhesion of platelets to the sites of vascular injury by forming a molecular bridge between sub-endothelial collagen matrix and platelet-surface receptor complex GPIb-IX-V. Also acts as a chaperone for coagulation factor VIII, delivering it to the site of injury, stabilizing its heterodimeric structure and protecting it from premature clearance from plasma. In Bos taurus (Bovine), this protein is von Willebrand factor (VWF).